We begin with the raw amino-acid sequence, 415 residues long: Beta-1,4-glucuronyltransferase 1 (415 aa).

Residues 1-8 (MQMSYAIR) lie on the Cytoplasmic side of the membrane. The chain crosses the membrane as a helical; Signal-anchor for type II membrane protein span at residues 9–36 (CAFYQLLLAALMLVAMLQLLYLSLLSGL). Residues 37–415 (HGQEEQDQYF…AKYPNSPRRC (379 aa)) lie on the Lumenal side of the membrane. Asparagine 204 is a glycosylation site (N-linked (GlcNAc...) asparagine). Mn(2+) contacts are provided by aspartate 227 and aspartate 229. The N-linked (GlcNAc...) asparagine glycan is linked to asparagine 300.

This sequence belongs to the glycosyltransferase 49 family. Interacts with LARGE1 and LARGE2. The cofactor is Mn(2+). As to expression, in the adult, highly expressed in heart, brain, skeletal muscle and kidney and to a lesser extent in placenta, pancreas, spleen, prostate, testis, ovary, small intestine and colon. Very weak expression in lung, liver, thymus and peripheral blood leukocytes. In fetal highly expressed in brain and kidney and to a lesser extent in lung and liver.

The protein resides in the golgi apparatus membrane. The catalysed reaction is 3-O-[beta-D-Xyl-(1-&gt;4)-Rib-ol-P-Rib-ol-P-3-beta-D-GalNAc-(1-&gt;3)-beta-D-GlcNAc-(1-&gt;4)-(O-6-P-alpha-D-Man)]-Thr-[protein] + UDP-alpha-D-glucuronate = 3-O-[beta-D-GlcA-(1-&gt;3)-beta-D-Xyl-(1-&gt;4)-Rib-ol-P-Rib-ol-P-3-beta-D-GalNAc-(1-&gt;3)-beta-D-GlcNAc-(1-&gt;4)-(O-6-P-alpha-D-Man)]-Thr-[protein] + UDP + H(+). It participates in protein modification; protein glycosylation. Its function is as follows. Beta-1,4-glucuronyltransferase involved in O-mannosylation of alpha-dystroglycan (DAG1). Transfers a glucuronic acid (GlcA) residue onto a xylose (Xyl) acceptor to produce the glucuronyl-beta-1,4-xylose-beta disaccharide primer, which is further elongated by LARGE1, during synthesis of phosphorylated O-mannosyl glycan. Phosphorylated O-mannosyl glycan is a carbohydrate structure present in alpha-dystroglycan (DAG1), which is required for binding laminin G-like domain-containing extracellular proteins with high affinity. Required for axon guidance; via its function in O-mannosylation of alpha-dystroglycan (DAG1). The polypeptide is Beta-1,4-glucuronyltransferase 1 (Homo sapiens (Human)).